The following is a 304-amino-acid chain: Putative S-adenosyl-L-methionine-dependent methyltransferase Mmcs_1043 (304 aa).

Residues Asp130 and 159–160 contribute to the S-adenosyl-L-methionine site; that span reads DL.

It belongs to the UPF0677 family.

In terms of biological role, exhibits S-adenosyl-L-methionine-dependent methyltransferase activity. This chain is Putative S-adenosyl-L-methionine-dependent methyltransferase Mmcs_1043, found in Mycobacterium sp. (strain MCS).